The following is a 60-amino-acid chain: Protein YmjC (60 aa).

Residues 40 to 60 (HKPYPTNKMQTTSGKKVIQDR) are disordered.

In Escherichia coli (strain K12), this protein is Protein YmjC (ymjC).